A 66-amino-acid chain; its full sequence is Large ribosomal subunit protein uL29 (66 aa).

This sequence belongs to the universal ribosomal protein uL29 family.

The protein is Large ribosomal subunit protein uL29 of Francisella tularensis subsp. holarctica (strain LVS).